Here is a 299-residue protein sequence, read N- to C-terminus: Trans-aconitate 3-methyltransferase (299 aa).

Serine 2 is modified (N-acetylserine).

The protein belongs to the methyltransferase superfamily. Tam family.

The protein resides in the cytoplasm. The catalysed reaction is trans-aconitate + S-adenosyl-L-methionine = (E)-2-(methoxycarbonylmethyl)but-2-enedioate + S-adenosyl-L-homocysteine. In terms of biological role, catalyzes the S-adenosylmethionine monomethyl esterification of trans-aconitate and 3-isopropylmalate at high affinity and of other molecules like cis-aconitate, isocitrate, and citrate at lower velocities and affinities. The function of trans-aconitate methylation appears to be in reducing the toxicity of this spontaneous breakdown product of cis-aconitate. The role of 3-isopropylmalate methylation is unclear but may represent a metabolic branch at 3-isopropylmalate, where some of the material is taken in the pathway leading to leucine and some is taken in a pathway to the 3-isopropylmalate methyl ester, a molecule that provides a signal to switch from vegetative to invasive growth in response to amino acid starvation. This is Trans-aconitate 3-methyltransferase (TMT1) from Saccharomyces cerevisiae (strain YJM789) (Baker's yeast).